Reading from the N-terminus, the 95-residue chain is Ribonuclease P protein component 1 (95 aa).

It belongs to the eukaryotic/archaeal RNase P protein component 1 family. Consists of a catalytic RNA component and at least 4 protein subunits. Forms a subcomplex with Rnp4 which stimulates the catalytic RNA.

The protein resides in the cytoplasm. It carries out the reaction Endonucleolytic cleavage of RNA, removing 5'-extranucleotides from tRNA precursor.. In terms of biological role, part of ribonuclease P, a protein complex that generates mature tRNA molecules by cleaving their 5'-ends. The polypeptide is Ribonuclease P protein component 1 (Methanocaldococcus jannaschii (strain ATCC 43067 / DSM 2661 / JAL-1 / JCM 10045 / NBRC 100440) (Methanococcus jannaschii)).